We begin with the raw amino-acid sequence, 429 residues long: Histidine--tRNA ligase (429 aa).

Belongs to the class-II aminoacyl-tRNA synthetase family. Homodimer.

The protein localises to the cytoplasm. It catalyses the reaction tRNA(His) + L-histidine + ATP = L-histidyl-tRNA(His) + AMP + diphosphate + H(+). In Streptococcus pneumoniae (strain Taiwan19F-14), this protein is Histidine--tRNA ligase.